The following is a 355-amino-acid chain: Methylthioribose-1-phosphate isomerase (355 aa).

Residues 53-55 (RGA), Arg-96, and Gln-205 contribute to the substrate site. The Proton donor role is filled by Asp-246. 256 to 257 (NK) provides a ligand contact to substrate.

Belongs to the eIF-2B alpha/beta/delta subunits family. MtnA subfamily.

It carries out the reaction 5-(methylsulfanyl)-alpha-D-ribose 1-phosphate = 5-(methylsulfanyl)-D-ribulose 1-phosphate. Its pathway is amino-acid biosynthesis; L-methionine biosynthesis via salvage pathway; L-methionine from S-methyl-5-thio-alpha-D-ribose 1-phosphate: step 1/6. Its function is as follows. Catalyzes the interconversion of methylthioribose-1-phosphate (MTR-1-P) into methylthioribulose-1-phosphate (MTRu-1-P). The polypeptide is Methylthioribose-1-phosphate isomerase (Thermosynechococcus vestitus (strain NIES-2133 / IAM M-273 / BP-1)).